Here is a 138-residue protein sequence, read N- to C-terminus: Endoribonuclease YbeY (138 aa).

Zn(2+)-binding residues include His98, His102, and His108.

Belongs to the endoribonuclease YbeY family. The cofactor is Zn(2+).

It is found in the cytoplasm. In terms of biological role, single strand-specific metallo-endoribonuclease involved in late-stage 70S ribosome quality control and in maturation of the 3' terminus of the 16S rRNA. This Thermosipho melanesiensis (strain DSM 12029 / CIP 104789 / BI429) protein is Endoribonuclease YbeY.